We begin with the raw amino-acid sequence, 645 residues long: 1-deoxy-D-xylulose-5-phosphate synthase (645 aa).

Thiamine diphosphate contacts are provided by residues histidine 83 and 124–126 (GHS). Aspartate 155 provides a ligand contact to Mg(2+). Residues 156-157 (GS), asparagine 184, tyrosine 295, and glutamate 376 contribute to the thiamine diphosphate site. Asparagine 184 serves as a coordination point for Mg(2+).

It belongs to the transketolase family. DXPS subfamily. As to quaternary structure, homodimer. Requires Mg(2+) as cofactor. Thiamine diphosphate is required as a cofactor.

The enzyme catalyses D-glyceraldehyde 3-phosphate + pyruvate + H(+) = 1-deoxy-D-xylulose 5-phosphate + CO2. Its pathway is metabolic intermediate biosynthesis; 1-deoxy-D-xylulose 5-phosphate biosynthesis; 1-deoxy-D-xylulose 5-phosphate from D-glyceraldehyde 3-phosphate and pyruvate: step 1/1. Functionally, catalyzes the acyloin condensation reaction between C atoms 2 and 3 of pyruvate and glyceraldehyde 3-phosphate to yield 1-deoxy-D-xylulose-5-phosphate (DXP). In Desulfotalea psychrophila (strain LSv54 / DSM 12343), this protein is 1-deoxy-D-xylulose-5-phosphate synthase.